The sequence spans 1154 residues: Spike glycoprotein (1154 aa).

The signal sequence occupies residues 1-18; sequence MLERSLLLATLLSALCSA. The Extracellular portion of the chain corresponds to 19-1096; it reads NLFGNNSYVY…LKTYIKWPWY (1078 aa). Asn23, Asn74, Asn102, Asn139, Asn145, Asn164, Asn179, Asn213, Asn238, Asn248, Asn265, Asn272, Asn277, Asn307, Asn426, Asn448, Asn514, Asn531, Asn543, Asn580, Asn592, Asn670, and Asn677 each carry an N-linked (GlcNAc...) asparagine; by host glycan. The segment at 770 to 875 is heptad repeat 1 (HR1); the sequence is IPFATQLQAR…QVDRIITGRL (106 aa). Residues 823-867 adopt a coiled-coil conformation; sequence QDVVNKQSSILTETMASLNKNFGAISSVLQDIYQQLDSIQADAQV. N-linked (GlcNAc...) asparagine; by host glycans are attached at residues Asn948, Asn961, Asn980, Asn1015, Asn1039, Asn1052, and Asn1075. The tract at residues 1025–1106 is heptad repeat 2 (HR2); it reads NDDFDFDDEL…VWLAIAFATI (82 aa). Residues 1056–1084 are a coiled coil; that stretch reads PILDIGSEIDRIQGVIQGLNDSLIDLETL. Residues 1097-1117 traverse the membrane as a helical segment; that stretch reads VWLAIAFATIIFILILGWLFF. At 1118–1154 the chain is on the cytoplasmic side; it reads MTGCCGCCCGCFGIIPLMSKCGKKSSYYTTFDNDVVT.

Belongs to the gammacoronaviruses spike protein family. In terms of assembly, homotrimer; each monomer consists of a S1 and a S2 subunit. The resulting peplomers protrude from the virus surface as spikes. Post-translationally, specific enzymatic cleavages in vivo yield mature proteins. The precursor is processed into S1 and S2 by host cell furin or furin-like protease to yield the mature S1 and S2 proteins. The cleavage site between S1 and S2 requires the optimal sequence [KR]-X-[KR]-R. Additionally, a second cleavage leads to the release of a fusion peptide after viral attachment to host cell receptor.

The protein resides in the virion membrane. The protein localises to the host endoplasmic reticulum-Golgi intermediate compartment membrane. Attaches the virion to the host cell membrane by interacting with sialic acids, initiating the infection. Functionally, mediates fusion of the virion and cellular membranes by acting as a class I viral fusion protein. Under the current model, the protein has at least 3 conformational states: pre-fusion native state, pre-hairpin intermediate state, and post-fusion hairpin state. During viral and target cell membrane fusion, the coiled coil regions (heptad repeats) assume a trimer-of-hairpins structure, positioning the fusion peptide in close proximity to the C-terminal region of the ectodomain. The formation of this structure appears to drive apposition and subsequent fusion of viral and target cell membranes. Its function is as follows. Acts as a viral fusion peptide after S2 cleavage occurring upon virus endocytosis. This is Spike glycoprotein from Gallus gallus (Chicken).